A 151-amino-acid polypeptide reads, in one-letter code: D-ribose pyranase 1 (151 aa).

H20 (proton donor) is an active-site residue. Substrate-binding positions include D28, H98, and 121–123 (WGN).

It belongs to the RbsD / FucU family. RbsD subfamily. In terms of assembly, homodecamer.

The protein resides in the cytoplasm. The catalysed reaction is beta-D-ribopyranose = beta-D-ribofuranose. It functions in the pathway carbohydrate metabolism; D-ribose degradation; D-ribose 5-phosphate from beta-D-ribopyranose: step 1/2. In terms of biological role, catalyzes the interconversion of beta-pyran and beta-furan forms of D-ribose. The sequence is that of D-ribose pyranase 1 from Streptomyces griseus subsp. griseus (strain JCM 4626 / CBS 651.72 / NBRC 13350 / KCC S-0626 / ISP 5235).